The following is a 372-amino-acid chain: Biotin synthase (372 aa).

The Radical SAM core domain maps to 73–308 (CCGNTVDLCS…QQIIRYAGGR (236 aa)). [4Fe-4S] cluster is bound by residues cysteine 91, cysteine 95, and cysteine 98. [2Fe-2S] cluster is bound by residues cysteine 136, cysteine 173, cysteine 233, and arginine 303.

The protein belongs to the radical SAM superfamily. Biotin synthase family. As to quaternary structure, homodimer. [4Fe-4S] cluster serves as cofactor. Requires [2Fe-2S] cluster as cofactor.

The enzyme catalyses (4R,5S)-dethiobiotin + (sulfur carrier)-SH + 2 reduced [2Fe-2S]-[ferredoxin] + 2 S-adenosyl-L-methionine = (sulfur carrier)-H + biotin + 2 5'-deoxyadenosine + 2 L-methionine + 2 oxidized [2Fe-2S]-[ferredoxin]. Its pathway is cofactor biosynthesis; biotin biosynthesis; biotin from 7,8-diaminononanoate: step 2/2. In terms of biological role, catalyzes the conversion of dethiobiotin (DTB) to biotin by the insertion of a sulfur atom into dethiobiotin via a radical-based mechanism. The chain is Biotin synthase from Cyanothece sp. (strain PCC 7425 / ATCC 29141).